Here is a 207-residue protein sequence, read N- to C-terminus: Vexin (207 aa).

The tract at residues 56-100 (ELLPHRGDRRDPGDRRRFGRLQTARPPTAHPAKASARPVGISEPK) is disordered. Residues 58–71 (LPHRGDRRDPGDRR) show a composition bias toward basic and acidic residues.

It belongs to the vexin family.

The protein resides in the cell membrane. It is found in the nucleus. Functionally, required for neurogenesis in the neural plate and retina. Strongly cooperates with neural bHLH factors to promote neurogenesis. The chain is Vexin from Homo sapiens (Human).